A 552-amino-acid polypeptide reads, in one-letter code: uncharacterized protein (552 aa).

Positions 8–200 constitute a DhaL domain; it reads KLFAEMIIQG…LAIVYAGFLK (193 aa).

This is an uncharacterized protein from Staphylococcus saprophyticus subsp. saprophyticus (strain ATCC 15305 / DSM 20229 / NCIMB 8711 / NCTC 7292 / S-41).